Reading from the N-terminus, the 132-residue chain is Matrix protein (132 aa).

The protein localises to the virion membrane. In terms of biological role, envelope protein that may play a role in host-cell attachment and viral genome entry. In Halorubrum pleomorphic virus 1 (HRPV-1), this protein is Matrix protein.